Consider the following 280-residue polypeptide: Acetyl-coenzyme A carboxylase carboxyl transferase subunit beta (280 aa).

One can recognise a CoA carboxyltransferase N-terminal domain in the interval 25-280 (VMRECPICHA…RLHTKENAYG (256 aa)). Zn(2+) contacts are provided by cysteine 29, cysteine 32, cysteine 47, and cysteine 50. A C4-type zinc finger spans residues 29–50 (CPICHAKFLSMRLGRDHTCPKC).

The protein belongs to the AccD/PCCB family. Acetyl-CoA carboxylase is a heterohexamer composed of biotin carboxyl carrier protein (AccB), biotin carboxylase (AccC) and two subunits each of ACCase subunit alpha (AccA) and ACCase subunit beta (AccD). It depends on Zn(2+) as a cofactor.

Its subcellular location is the cytoplasm. It catalyses the reaction N(6)-carboxybiotinyl-L-lysyl-[protein] + acetyl-CoA = N(6)-biotinyl-L-lysyl-[protein] + malonyl-CoA. The protein operates within lipid metabolism; malonyl-CoA biosynthesis; malonyl-CoA from acetyl-CoA: step 1/1. Component of the acetyl coenzyme A carboxylase (ACC) complex. Biotin carboxylase (BC) catalyzes the carboxylation of biotin on its carrier protein (BCCP) and then the CO(2) group is transferred by the transcarboxylase to acetyl-CoA to form malonyl-CoA. The sequence is that of Acetyl-coenzyme A carboxylase carboxyl transferase subunit beta from Lactobacillus helveticus (strain DPC 4571).